We begin with the raw amino-acid sequence, 129 residues long: Small ribosomal subunit protein uS11 (129 aa).

Belongs to the universal ribosomal protein uS11 family. Part of the 30S ribosomal subunit. Interacts with proteins S7 and S18. Binds to IF-3.

In terms of biological role, located on the platform of the 30S subunit, it bridges several disparate RNA helices of the 16S rRNA. Forms part of the Shine-Dalgarno cleft in the 70S ribosome. In Rhodopseudomonas palustris (strain BisB18), this protein is Small ribosomal subunit protein uS11.